An 883-amino-acid polypeptide reads, in one-letter code: Sodium/sulfate cotransporter 2 (883 aa).

6 helical membrane-spanning segments follow: residues 3 to 23 (FGWQ…VMAA), 30 to 50 (VTFT…VTVA), 60 to 80 (GLLT…TGGL), 106 to 126 (MCLS…PILI), 139 to 159 (LLIP…IGTS), and 185 to 205 (IFDI…FILL). RCK C-terminal domains lie at 211-295 (LPGN…EFGL), 317-401 (VFTP…SKNN), 406-491 (VRAV…FPGL), and 497-583 (EQVD…DKSF). Helical transmembrane passes span 600 to 620 (MVIG…GGLK), 624 to 644 (YIHL…TGCM), 657 to 677 (VYLT…TGVA), 693 to 713 (SDGA…ELLT), 774 to 794 (FAII…FILC), and 802 to 822 (VWIV…LYFL). The segment at 857 to 883 (QASRTGSDGTGSSDSPRALGVPKVITA) is disordered. The segment covering 861 to 871 (TGSDGTGSSDS) has biased composition (low complexity).

The protein belongs to the divalent anion:Na+ symporter (DASS) superfamily. Na+/sulfate symporter (TC 2.A.47.4) family.

The protein localises to the cell membrane. Na(+)/sulfate cotransporter with a probable high-affinity for sulfate and a proteasome dependent turnover. This Chlamydomonas reinhardtii (Chlamydomonas smithii) protein is Sodium/sulfate cotransporter 2 (SLT2).